Here is a 302-residue protein sequence, read N- to C-terminus: MAGQLRAYRRQIRSVQATKKITRAMELIAASRIIKAQANVRASTPYARALTRAVSAAASNSSLDHPLITEKTEVKRAAVLLCSSDRGLAGAYSSSVLREGERLTATLRAEGKEIAPYLVGRKAAAFYNFRRRAVVDQWAGFTDSPSYEDAKTIGDRLVADFGKEFADGGVDEIHVVYTHFVSMVTQEPRVIRLLPLEVVEGVEAPSDGELQPLYEFEPSADAVLDALLPQYVNSRIYNCLLQAAASELAARQRAMKSATDNADELIKKLTRLANNARQADITQEISEIVGGADALASSGSRA.

It belongs to the ATPase gamma chain family. In terms of assembly, F-type ATPases have 2 components, CF(1) - the catalytic core - and CF(0) - the membrane proton channel. CF(1) has five subunits: alpha(3), beta(3), gamma(1), delta(1), epsilon(1). CF(0) has three main subunits: a, b and c.

The protein localises to the cell membrane. In terms of biological role, produces ATP from ADP in the presence of a proton gradient across the membrane. The gamma chain is believed to be important in regulating ATPase activity and the flow of protons through the CF(0) complex. The polypeptide is ATP synthase gamma chain (Kineococcus radiotolerans (strain ATCC BAA-149 / DSM 14245 / SRS30216)).